A 1818-amino-acid polypeptide reads, in one-letter code: Protein encore (1818 aa).

Disordered regions lie at residues 47–68 (ANSS…GVSG), 123–282 (SAAG…NSSN), and 317–413 (AERH…GFIS). Residues 52 to 66 (VGSGSGPGPGSGAGV) are compositionally biased toward gly residues. Residues 124 to 137 (AAGSSNLGRQNSFG) show a composition bias toward polar residues. A compositionally biased stretch (basic residues) spans 141–152 (GNMKGKHLTRSH). 4 stretches are compositionally biased toward low complexity: residues 156-179 (ESTS…QLQG), 186-199 (NNNN…AQSA), 217-233 (QQPQ…QQSV), and 266-282 (NSNG…NSSN). A phosphoserine mark is found at Ser-267 and Ser-270. Over residues 317–328 (AERHDRHERHEM) the composition is skewed to basic and acidic residues. Position 336 is a phosphoserine (Ser-336). The span at 338–348 (NHDEEPYHYEP) shows a compositional bias: basic and acidic residues. Low complexity-rich tracts occupy residues 372 to 381 (NLGGSSSGSI) and 391 to 410 (NCNN…NTSG). The 65-residue stretch at 444 to 508 (RNILLKIEKD…QCVIVAVAKN (65 aa)) folds into the R3H domain. The 67-residue stretch at 510 to 576 (RIPEIRFQSL…ARSRIFSRTG (67 aa)) folds into the SUZ domain. Ser-535 carries the phosphoserine modification. Positions 557-568 (FEEREEDYDRAR) are enriched in basic and acidic residues. 6 disordered regions span residues 557-806 (FEER…SYEQ), 885-916 (QEQE…SQTP), 936-959 (PYSQ…EEPK), 1176-1249 (GQAP…YNPS), 1332-1648 (AAAG…LVSH), and 1684-1709 (GAGA…RSHI). Positions 592-606 (YGGWEQQQQQQKQSQ) are enriched in low complexity. Residues 644–655 (NYGGPPSSGGPG) show a composition bias toward gly residues. The span at 678–695 (QDSTGSTPWRLSPSSSGS) shows a compositional bias: polar residues. Residues 713-771 (SGNQYQSQNQGNSSSGGYNNYRKSSPHQQQQSQQQQQSQQHHQQQLQQPQQLHQQSSQQ) show a composition bias toward low complexity. The span at 772–784 (YATTELSCSSTES) shows a compositional bias: polar residues. Residues 893–904 (AGPSSSGSATSS) show a composition bias toward low complexity. Residues 1176–1197 (GQAPMQQQAPHTGAGTTTGPPT) show a composition bias toward low complexity. Residues 1220–1231 (SSNGSVVTSSAY) show a composition bias toward polar residues. Low complexity predominate over residues 1381–1392 (ASQSAPSTPAAP). A compositionally biased stretch (polar residues) spans 1430–1443 (TPHYYQGQNSNEGY). Over residues 1503–1521 (ASPSSVSLGGASSSGGANS) the composition is skewed to low complexity. Composition is skewed to polar residues over residues 1554–1565 (AANSSPGVSSYE) and 1579–1596 (FRSQ…VSQR). Residues 1608-1633 (SHESSNNSPNSIVGSQSNSAANTPNA) show a composition bias toward low complexity. Residues 1684 to 1705 (GAGASGAAGSNGGHQPGGGGGA) show a composition bias toward gly residues.

Interacts with hfp; however, given the nuclear localization of hfp, the relevance of such interaction is unclear. Interacts with CycE, Cul1, and the SCF-proteasome complex. Expressed in all germline cells of the germarium including the stem cells and dividing cystocytes.

It localises to the cytoplasm. Required for the regulation of germline mitosis, karyosome formation, and establishment of dorsoventral (DS) polarity of the egg and embryo. Involved in proper grk mRNA localization and translation in the oocyte. May control germline mitosis by facilitating the cyclin E (CycE) proteolysis by the SCF-ubiquitin-proteasome complex. The sequence is that of Protein encore (enc) from Drosophila melanogaster (Fruit fly).